A 627-amino-acid chain; its full sequence is Transducer protein MpcT (627 aa).

2 helical membrane passes run 28–48 and 55–75; these read MLTAVGLQFLAAGGMAFLTVF and LIGVGGMLALSVVAFYNTYLI. 2 HAMP domains span residues 78–132 and 192–247; these read ADFV…VASR and EQLR…DTIS. The Methyl-accepting transducer domain maps to 266–502; that stretch reads RVDAVADRSA…DVVGMVEEVA (237 aa). E310, E416, and E507 each carry glutamate methyl ester (Glu). Disordered stretches follow at residues 505–527 and 557–627; these read SEETAAESDTVADNAAEQTDATD and GTAD…ADSQ. Low complexity predominate over residues 580–590; it reads AAAVVDQPQPA.

It belongs to the methyl-accepting chemotaxis (MCP) protein family. In terms of assembly, interacts with CheA, CheY and CheW1. Post-translationally, methylated by CheR.

It is found in the cell membrane. Its function is as follows. Mediates bacteriorhodopsin- and halorhodopsin-dependent photoresponses by detecting membrane potential changes. Probably transduces the signal to the histidine kinase CheA. This Halobacterium salinarum (strain ATCC 29341 / DSM 671 / R1) protein is Transducer protein MpcT (mpcT).